Reading from the N-terminus, the 644-residue chain is DNA mismatch repair protein MutL (644 aa).

A disordered region spans residues 363-405; that stretch reads GTFNPFTDDKTNQHYTKAGSGSGSGYSSGSSSSSGSGSGSSYS. The span at 389–405 shows a compositional bias: low complexity; that stretch reads SSGSSSSSGSGSGSSYS.

This sequence belongs to the DNA mismatch repair MutL/HexB family.

Functionally, this protein is involved in the repair of mismatches in DNA. It is required for dam-dependent methyl-directed DNA mismatch repair. May act as a 'molecular matchmaker', a protein that promotes the formation of a stable complex between two or more DNA-binding proteins in an ATP-dependent manner without itself being part of a final effector complex. The protein is DNA mismatch repair protein MutL of Flavobacterium johnsoniae (strain ATCC 17061 / DSM 2064 / JCM 8514 / BCRC 14874 / CCUG 350202 / NBRC 14942 / NCIMB 11054 / UW101) (Cytophaga johnsonae).